The chain runs to 144 residues: Large ribosomal subunit protein uL15 (144 aa).

Residues 1–52 (MKLHTLKSTPGARVEKHRVGRGHAAGKGKQAGKGQSGQNKRHGHRLGFEGGQ) form a disordered region. Residues 15-26 (EKHRVGRGHAAG) show a composition bias toward basic residues.

The protein belongs to the universal ribosomal protein uL15 family. Part of the 50S ribosomal subunit.

Functionally, binds to the 23S rRNA. The polypeptide is Large ribosomal subunit protein uL15 (Mycoplasmopsis agalactiae (strain NCTC 10123 / CIP 59.7 / PG2) (Mycoplasma agalactiae)).